The sequence spans 234 residues: Orotidine 5'-phosphate decarboxylase (234 aa).

Residues D11, K33, 60 to 69 (DLKFHDIPNT), T120, R181, Q190, G210, and R211 contribute to the substrate site. K62 serves as the catalytic Proton donor.

This sequence belongs to the OMP decarboxylase family. Type 1 subfamily. In terms of assembly, homodimer.

The catalysed reaction is orotidine 5'-phosphate + H(+) = UMP + CO2. It functions in the pathway pyrimidine metabolism; UMP biosynthesis via de novo pathway; UMP from orotate: step 2/2. Catalyzes the decarboxylation of orotidine 5'-monophosphate (OMP) to uridine 5'-monophosphate (UMP). The protein is Orotidine 5'-phosphate decarboxylase of Aliivibrio salmonicida (strain LFI1238) (Vibrio salmonicida (strain LFI1238)).